The primary structure comprises 333 residues: Glyceraldehyde-3-phosphate dehydrogenase (333 aa).

NAD(+) is bound by residues 11-12 (RI), Asp-35, Met-79, and Ser-121. D-glyceraldehyde 3-phosphate-binding positions include 150–152 (SCT), Thr-181, 210–211 (TG), and Arg-233. Residue Cys-151 is the Nucleophile of the active site. Asn-315 contacts NAD(+).

The protein belongs to the glyceraldehyde-3-phosphate dehydrogenase family. Homotetramer.

Its subcellular location is the cytoplasm. It carries out the reaction D-glyceraldehyde 3-phosphate + phosphate + NAD(+) = (2R)-3-phospho-glyceroyl phosphate + NADH + H(+). It functions in the pathway carbohydrate degradation; glycolysis; pyruvate from D-glyceraldehyde 3-phosphate: step 1/5. Its function is as follows. Catalyzes the oxidative phosphorylation of glyceraldehyde 3-phosphate (G3P) to 1,3-bisphosphoglycerate (BPG) using the cofactor NAD. The first reaction step involves the formation of a hemiacetal intermediate between G3P and a cysteine residue, and this hemiacetal intermediate is then oxidized to a thioester, with concomitant reduction of NAD to NADH. The reduced NADH is then exchanged with the second NAD, and the thioester is attacked by a nucleophilic inorganic phosphate to produce BPG. The chain is Glyceraldehyde-3-phosphate dehydrogenase (gap) from Bacteroides fragilis (strain YCH46).